The sequence spans 184 residues: Elongation factor P (184 aa).

The protein belongs to the elongation factor P family.

It is found in the cytoplasm. It functions in the pathway protein biosynthesis; polypeptide chain elongation. Functionally, involved in peptide bond synthesis. Stimulates efficient translation and peptide-bond synthesis on native or reconstituted 70S ribosomes in vitro. Probably functions indirectly by altering the affinity of the ribosome for aminoacyl-tRNA, thus increasing their reactivity as acceptors for peptidyl transferase. The polypeptide is Elongation factor P (Leptothrix cholodnii (strain ATCC 51168 / LMG 8142 / SP-6) (Leptothrix discophora (strain SP-6))).